The chain runs to 412 residues: [Pyruvate dehydrogenase (acetyl-transferring)] kinase isozyme 4, mitochondrial (412 aa).

Residues 138-368 (IIEYKDSCTV…DAIIYLKALS (231 aa)) form the Histidine kinase domain. Residues 254-261 (ELFKNAMR), Asp-293, 312-313 (ST), and 329-334 (GFGYGL) each bind ATP.

Belongs to the PDK/BCKDK protein kinase family. Homodimer. Interacts with the pyruvate dehydrogenase complex subunit DLAT, and is part of the multimeric pyruvate dehydrogenase complex that contains multiple copies of pyruvate dehydrogenase (E1), dihydrolipoamide acetyltransferase (DLAT, E2) and lipoamide dehydrogenase (DLD, E3). Detected in heart, white adipose tissue and muscle.

Its subcellular location is the mitochondrion matrix. The catalysed reaction is L-seryl-[pyruvate dehydrogenase E1 alpha subunit] + ATP = O-phospho-L-seryl-[pyruvate dehydrogenase E1 alpha subunit] + ADP + H(+). Its function is as follows. Kinase that plays a key role in regulation of glucose and fatty acid metabolism and homeostasis via phosphorylation of the pyruvate dehydrogenase subunits PDHA1 and PDHA2. This inhibits pyruvate dehydrogenase activity, and thereby regulates metabolite flux through the tricarboxylic acid cycle, down-regulates aerobic respiration and inhibits the formation of acetyl-coenzyme A from pyruvate. Inhibition of pyruvate dehydrogenase decreases glucose utilization and increases fat metabolism in response to prolonged fasting and starvation. Plays an important role in maintaining normal blood glucose levels under starvation, and is involved in the insulin signaling cascade. Via its regulation of pyruvate dehydrogenase activity, plays an important role in maintaining normal blood pH and in preventing the accumulation of ketone bodies under starvation. In the fed state, mediates cellular responses to glucose levels and to a high-fat diet. Regulates both fatty acid oxidation and de novo fatty acid biosynthesis. Plays a role in the generation of reactive oxygen species. Protects detached epithelial cells against anoikis. Plays a role in cell proliferation via its role in regulating carbohydrate and fatty acid metabolism. The sequence is that of [Pyruvate dehydrogenase (acetyl-transferring)] kinase isozyme 4, mitochondrial (PDK4) from Rhinolophus ferrumequinum (Greater horseshoe bat).